Consider the following 91-residue polypeptide: MVFDLLERLFNRNKTGSATVAKDRLKMVLAVDRTEIAPQTIEQIRKEILDVIVRYFEIDENEKFDVTLERERGSTAIIANVPIRRIRPEHI.

Belongs to the MinE family.

Functionally, prevents the cell division inhibition by proteins MinC and MinD at internal division sites while permitting inhibition at polar sites. This ensures cell division at the proper site by restricting the formation of a division septum at the midpoint of the long axis of the cell. This Gloeobacter violaceus (strain ATCC 29082 / PCC 7421) protein is Cell division topological specificity factor.